The chain runs to 352 residues: N-acetyl-gamma-glutamyl-phosphate reductase (352 aa).

Belongs to the NAGSA dehydrogenase family. Type 1 subfamily.

The protein localises to the cytoplasm. The enzyme catalyses N-acetyl-L-glutamate 5-semialdehyde + phosphate + NADP(+) = N-acetyl-L-glutamyl 5-phosphate + NADPH + H(+). It functions in the pathway amino-acid biosynthesis; L-arginine biosynthesis; N(2)-acetyl-L-ornithine from L-glutamate: step 3/4. Catalyzes the NADPH-dependent reduction of N-acetyl-5-glutamyl phosphate to yield N-acetyl-L-glutamate 5-semialdehyde. The sequence is that of N-acetyl-gamma-glutamyl-phosphate reductase from Nostoc ellipsosporum.